Here is a 113-residue protein sequence, read N- to C-terminus: MKARLGSLLVLATLVTASNAACSIQRLKRLPNEKSDECTDVDGGKHVLNTYWQKNCEWCFCEKTAITCCTKTLIPVSYDKKRCQRQFHSENCTYSVVERTNPGKTCPVNGWTI.

A signal peptide spans 1–20 (MKARLGSLLVLATLVTASNA). Cystine bridges form between Cys-22–Cys-69, Cys-38–Cys-61, Cys-56–Cys-92, Cys-59–Cys-68, and Cys-83–Cys-106.

The protein belongs to the beta-microseminoprotein family. Homodimer; Interacts with PI16.

It localises to the secreted. This is Beta-microseminoprotein (Msmb) from Rattus norvegicus (Rat).